Reading from the N-terminus, the 409-residue chain is Nucleoprotein (409 aa).

Disordered regions lie at residues 1-32 (MASGKATGKTDAPAPVIKLGGPKPPKVGSSGN), 46-68 (IPPPKFEGSGVPDNENLKSSQQH), 164-196 (RSGRSTAASSAASSRAPSREVSRGRRSGSEDDL), and 238-258 (VDQVFGPRTKGKEGNFGDDKM). A compositionally biased stretch (low complexity) spans 15–31 (PVIKLGGPKPPKVGSSG). The RNA-binding stretch occupies residues 29–160 (SSGNASWFQA…GNFRWDFIPL (132 aa)). One can recognise a CoV N NTD domain in the interval 31–156 (GNASWFQAIK…GGPDGNFRWD (126 aa)). A compositionally biased stretch (low complexity) spans 166–179 (GRSTAASSAASSRA). Basic and acidic residues-rich tracts occupy residues 180–192 (PSREVSRGRRSGS) and 247–258 (KGKEGNFGDDKM). A phosphoserine; by host mark is found at Ser-190 and Ser-192. The region spanning 215 to 331 (TKAKADEMAH…QCVDGVGTRP (117 aa)) is the CoV N CTD domain. The tract at residues 226–333 (RYCKRTIPPN…VDGVGTRPKD (108 aa)) is dimerization. A disulfide bond links Cys-320 and Cys-323. The tract at residues 326 to 409 (GVGTRPKDDE…GDAALGENEL (84 aa)) is disordered. A compositionally biased stretch (basic residues) spans 358-367 (QRPKKEKKPK). Basic and acidic residues predominate over residues 368–384 (KHDDEVDKALTSDEERN). The residue at position 378 (Thr-378) is a Phosphothreonine; by host. Phosphoserine; by host is present on Ser-379.

This sequence belongs to the gammacoronavirus nucleocapsid protein family. As to quaternary structure, homooligomer. Both monomeric and oligomeric forms interact with RNA. Interacts with protein M. Interacts with NSP3; this interaction serves to tether the genome to the newly translated replicase-transcriptase complex at a very early stage of infection. ADP-ribosylated. The ADP-ribosylation is retained in the virion during infection. In terms of processing, phosphorylated on serine and threonine residues.

The protein resides in the virion. It localises to the host endoplasmic reticulum-Golgi intermediate compartment. The protein localises to the host Golgi apparatus. Functionally, packages the positive strand viral genome RNA into a helical ribonucleocapsid (RNP) and plays a fundamental role during virion assembly through its interactions with the viral genome and membrane protein M. Plays an important role in enhancing the efficiency of subgenomic viral RNA transcription as well as viral replication. In Avian infectious bronchitis virus (strain M41) (IBV), this protein is Nucleoprotein.